An 87-amino-acid chain; its full sequence is Small ribosomal subunit protein bS20 (87 aa).

A disordered region spans residues 1–26; the sequence is MANIKSAKKRAVQSEKARKHNASRRS.

Belongs to the bacterial ribosomal protein bS20 family.

Binds directly to 16S ribosomal RNA. This is Small ribosomal subunit protein bS20 from Klebsiella pneumoniae (strain 342).